A 183-amino-acid polypeptide reads, in one-letter code: Transcription factor E (183 aa).

The region spanning 4-97 (YIELVRRYVY…SWSIKDEDIR (94 aa)) is the HTH TFE/IIEalpha-type domain.

This sequence belongs to the TFE family. As to quaternary structure, monomer. Interaction with RNA polymerase subunits RpoF and RpoE is necessary for Tfe stimulatory transcription activity. Able to interact with Tbp and RNA polymerase in the absence of DNA promoter. Interacts both with the preinitiation and elongation complexes.

Its function is as follows. Transcription factor that plays a role in the activation of archaeal genes transcribed by RNA polymerase. Facilitates transcription initiation by enhancing TATA-box recognition by TATA-box-binding protein (Tbp), and transcription factor B (Tfb) and RNA polymerase recruitment. Not absolutely required for transcription in vitro, but particularly important in cases where Tbp or Tfb function is not optimal. It dynamically alters the nucleic acid-binding properties of RNA polymerases by stabilizing the initiation complex and destabilizing elongation complexes. Seems to translocate with the RNA polymerase following initiation and acts by binding to the non template strand of the transcription bubble in elongation complexes. The polypeptide is Transcription factor E (Caldivirga maquilingensis (strain ATCC 700844 / DSM 13496 / JCM 10307 / IC-167)).